Consider the following 132-residue polypeptide: Ribosome-binding factor A (132 aa).

This sequence belongs to the RbfA family. In terms of assembly, monomer. Binds 30S ribosomal subunits, but not 50S ribosomal subunits or 70S ribosomes.

Its subcellular location is the cytoplasm. One of several proteins that assist in the late maturation steps of the functional core of the 30S ribosomal subunit. Associates with free 30S ribosomal subunits (but not with 30S subunits that are part of 70S ribosomes or polysomes). Required for efficient processing of 16S rRNA. May interact with the 5'-terminal helix region of 16S rRNA. This Pectobacterium atrosepticum (strain SCRI 1043 / ATCC BAA-672) (Erwinia carotovora subsp. atroseptica) protein is Ribosome-binding factor A.